The sequence spans 464 residues: Cysteine--tRNA ligase (464 aa).

Residue Cys29 coordinates Zn(2+). The short motif at 31–41 (ATVQGVPHIGH) is the 'HIGH' region element. The interval 160 to 180 (RLDEVQQGESTASGKRDPRDF) is disordered. Residues Cys208, His233, and Glu237 each contribute to the Zn(2+) site. A 'KMSKS' region motif is present at residues 264 to 268 (KMSKS). Residue Lys267 participates in ATP binding.

It belongs to the class-I aminoacyl-tRNA synthetase family. In terms of assembly, monomer. Zn(2+) is required as a cofactor.

It localises to the cytoplasm. It carries out the reaction tRNA(Cys) + L-cysteine + ATP = L-cysteinyl-tRNA(Cys) + AMP + diphosphate. The polypeptide is Cysteine--tRNA ligase (Saccharopolyspora erythraea (strain ATCC 11635 / DSM 40517 / JCM 4748 / NBRC 13426 / NCIMB 8594 / NRRL 2338)).